Here is a 352-residue protein sequence, read N- to C-terminus: MAAKLLFFLLFLVSALSVALAGFEEDNPIRSVTQRPDSIEPAILGVLGSCRHAFHFARFARRYGKSYGSEEEIKKRFGIFVENLAFIRSTNRKDLSYTLGINQFADLTWEEFRTNRLGAAQNCSATAHGNHRFVDGVLPVTRDWREQGIVSPVKDQGSCGSWTFSTTGALEAAYTQLTGSTLSEQQLVDCASAFNNFGCGGLPSQAFEYVKYNGGIDTEQTYPYLGVMGICNFKQENVGVKVIDSINITLGAEDELKHAVGLVRPVSVAFEVVKGFNLYKKGVYSSDTCGRDPMDVNHAVLAVGYGVEDGIPYWLIKNSWGTNWGDNGYFKMELGKNMCGVATCASYPIVAV.

An N-linked (GlcNAc...) asparagine glycan is attached at asparagine 122. 2 disulfides stabilise this stretch: cysteine 159–cysteine 199 and cysteine 190–cysteine 231. Asparagine 247 is a glycosylation site (N-linked (GlcNAc...) asparagine). Residues cysteine 289 and cysteine 339 are joined by a disulfide bond. Catalysis depends on residues histidine 298 and asparagine 318.

The protein belongs to the peptidase C1 family. Forms homodimers, homotrimers and homotetramers. In terms of tissue distribution, mainly expressed in pods, but also present in stems, roots, leaves and embryos (at protein level).

Its subcellular location is the plastid. The protein localises to the chloroplast. It catalyses the reaction (E)-4-coumarate + H2O = 4-hydroxybenzaldehyde + acetate. It functions in the pathway aromatic compound metabolism; phenylpropanoid biosynthesis. With respect to regulation, inhibited by ascorbate. Functionally, involved in the biosynthesis of vanillin (4-hydroxy-3-methoxy-benzaldehyde) and derivative natural products, key components of vanilla pods flavor. Catalyzes the conversion of (E)-4-coumarate to 4-hydroxybenzaldehyde, a vanillin precursor. Mediates the conversion of ferulic acid to 3-methoxy-4-hydroxybenzaldehyde with a very low efficiency. Cannot use cinnamic, caffeic, sinapic and o-coumaric acids as substrates. The protein is 4-hydroxybenzaldehyde synthase, chloroplastic of Vanilla planifolia (Vanilla).